A 317-amino-acid polypeptide reads, in one-letter code: 2,3,4,5-tetrahydropyridine-2,6-dicarboxylate N-succinyltransferase (317 aa).

Aspartate 166 and glutamate 183 together coordinate Mg(2+). The Acyl-anhydride intermediate role is filled by glutamate 199. Succinyl-CoA-binding positions include arginine 201, glycine 216, serine 219, alanine 242, 257–258 (EA), glycine 265, lysine 277, and 290–293 (RRNS).

It belongs to the type 2 tetrahydrodipicolinate N-succinyltransferase family. As to quaternary structure, homotrimer.

The protein resides in the cytoplasm. It carries out the reaction (S)-2,3,4,5-tetrahydrodipicolinate + succinyl-CoA + H2O = (S)-2-succinylamino-6-oxoheptanedioate + CoA. It participates in amino-acid biosynthesis; L-lysine biosynthesis via DAP pathway; LL-2,6-diaminopimelate from (S)-tetrahydrodipicolinate (succinylase route): step 1/3. Catalyzes the conversion of the cyclic tetrahydrodipicolinate (THDP) into the acyclic N-succinyl-L-2-amino-6-oxopimelate using succinyl-CoA. In Mycobacterium tuberculosis (strain CDC 1551 / Oshkosh), this protein is 2,3,4,5-tetrahydropyridine-2,6-dicarboxylate N-succinyltransferase (dapD).